The following is a 224-amino-acid chain: Endonuclease NucS (224 aa).

This sequence belongs to the NucS endonuclease family.

The protein localises to the cytoplasm. Functionally, cleaves both 3' and 5' ssDNA extremities of branched DNA structures. The protein is Endonuclease NucS of Rhodococcus erythropolis (strain PR4 / NBRC 100887).